A 197-amino-acid chain; its full sequence is Peptidyl-tRNA hydrolase (197 aa).

Tyr-21 is a binding site for tRNA. The active-site Proton acceptor is the His-26. TRNA is bound by residues Tyr-72, Asn-74, and Asn-120.

The protein belongs to the PTH family. In terms of assembly, monomer.

It localises to the cytoplasm. The catalysed reaction is an N-acyl-L-alpha-aminoacyl-tRNA + H2O = an N-acyl-L-amino acid + a tRNA + H(+). Hydrolyzes ribosome-free peptidyl-tRNAs (with 1 or more amino acids incorporated), which drop off the ribosome during protein synthesis, or as a result of ribosome stalling. Functionally, catalyzes the release of premature peptidyl moieties from peptidyl-tRNA molecules trapped in stalled 50S ribosomal subunits, and thus maintains levels of free tRNAs and 50S ribosomes. The sequence is that of Peptidyl-tRNA hydrolase from Alkalilimnicola ehrlichii (strain ATCC BAA-1101 / DSM 17681 / MLHE-1).